Consider the following 640-residue polypeptide: Leucine-rich repeat-containing protein 4C (640 aa).

Residues 1–44 (MLNKMTLHPQQIMIGPRFNRALFDPLLVVLLALQLLVVAGLVRA) form the signal peptide. The region spanning 45-76 (QTCPSVCSCSNQFSKVICVRKNLREVPDGIST) is the LRRNT domain. LRR repeat units lie at residues 77 to 98 (NTRL…SFKH), 101 to 122 (HLEI…AFNG), 125 to 146 (NLNT…AFVY), 149 to 170 (KLKE…AFNR), 173 to 195 (SLRR…AFEG), 198 to 219 (NLRY…TPLI), 220 to 241 (KLDE…SFQG), 244 to 265 (HLQK…AFDN), and 268 to 289 (SLVE…LFTP). The LRRCT domain occupies 301-353 (NPWNCNCDILWLSWWIKDMAPSNTACCARCNTPPNLKGRYIGELDQNYFTCYA). Residues 354–442 (PVIVEPPADL…GNTTASATLN (89 aa)) enclose the Ig-like C2-type domain. Cys375 and Cys426 are joined by a disulfide. Residues 463 to 483 (EPSQDEARTTDNNVGPTPVVD) form a disordered region. A helical membrane pass occupies residues 528 to 548 (IIIGCFVAITLMAAVMLVIFY). Ser631 is modified (phosphoserine).

As to quaternary structure, interacts with NTNG1 and WHRN. In terms of tissue distribution, highly expressed in the cerebral cortex, including frontal, parietal and occipital lobes. Putamen, amygdala, hippocampus and medulla oblongata show moderate expression. Caudate nucleus and thalamus express small amounts, whereas other brain regions show very weak or no expression.

It is found in the postsynaptic cell membrane. Functionally, may promote neurite outgrowth of developing thalamic neurons. This Homo sapiens (Human) protein is Leucine-rich repeat-containing protein 4C (LRRC4C).